The chain runs to 382 residues: Phenylalanine dehydrogenase (382 aa).

R54 is a binding site for NAD(+). Residue K78 participates in L-phenylalanine binding. K90 functions as the Proton donor/acceptor in the catalytic mechanism. Residues D125, S156, T160, 190–196, 213–214, 253–254, and 274–276 contribute to the NAD(+) site; these read GLGKVGY, DI, AF, and SAN. Position 276 (N276) interacts with L-phenylalanine.

This sequence belongs to the Glu/Leu/Phe/Val dehydrogenases family.

It carries out the reaction L-phenylalanine + NAD(+) + H2O = 3-phenylpyruvate + NH4(+) + NADH + H(+). With respect to regulation, activity is not affected by the metal chelating agent EDTA. Addition of 1 mM Mg(2+) results in 15% increase in activity, while the enzyme is strongly inhibited by 1 mM Fe(3+), Fe(2+), Cu(2+), Zn(2+) and Ag(+). In terms of biological role, catalyzes the reversible NAD(+)-dependent oxidative deamination of L-phenylalanine to phenylpyruvate. Can also catalyze the oxidative deamination of several other amino acids, with much lower efficiency. Shows activity towards various bulky aromatic alpha-keto acids/esters and (S)-amine alcohols. Can catalyze the amination of 3-(2-chlorophenyl)-2-oxopropionic acid (CPOA) to produce 2-chloro-L-phenylalanine (2-Cl-Phe), a chemical compound used in the pharmaceutical and biotechnology industries. Shows a preference for amination over deamination. The polypeptide is Phenylalanine dehydrogenase (Bacillus thermotolerans (Quasibacillus thermotolerans)).